A 351-amino-acid chain; its full sequence is Biotin synthase (351 aa).

In terms of domain architecture, Radical SAM core spans 49–265 (NRVRIHILDN…LSVFRLVNPD (217 aa)). [4Fe-4S] cluster is bound by residues C64, C68, and C71. Residues C108, C140, C200, and R269 each coordinate [2Fe-2S] cluster.

This sequence belongs to the radical SAM superfamily. Biotin synthase family. In terms of assembly, homodimer. The cofactor is [4Fe-4S] cluster. It depends on [2Fe-2S] cluster as a cofactor.

It carries out the reaction (4R,5S)-dethiobiotin + (sulfur carrier)-SH + 2 reduced [2Fe-2S]-[ferredoxin] + 2 S-adenosyl-L-methionine = (sulfur carrier)-H + biotin + 2 5'-deoxyadenosine + 2 L-methionine + 2 oxidized [2Fe-2S]-[ferredoxin]. Its pathway is cofactor biosynthesis; biotin biosynthesis; biotin from 7,8-diaminononanoate: step 2/2. Catalyzes the conversion of dethiobiotin (DTB) to biotin by the insertion of a sulfur atom into dethiobiotin via a radical-based mechanism. The chain is Biotin synthase from Leptospira biflexa serovar Patoc (strain Patoc 1 / Ames).